The chain runs to 206 residues: MTHSTGTLYIISAPSGAGKSSLVKALTDTNPDIRVSISHTTRAMRPGEVDGVNYHFVTREEFVKMGEHGDFLERAEVFGNFYGTSQSRLQQTLDEGHDLILEIDWQGAEQVRKLMPQARSIFILPPSLQALHQRLTNRGQDSDEIIDGRMREAVSEMSHYVEYDYLIINDDFAHALDDLKAIFRANQLQQKRQQVRFGKLLAELLG.

The Guanylate kinase-like domain occupies 6 to 184 (GTLYIISAPS…ALDDLKAIFR (179 aa)). 13 to 20 (APSGAGKS) is an ATP binding site.

It belongs to the guanylate kinase family.

The protein localises to the cytoplasm. It catalyses the reaction GMP + ATP = GDP + ADP. In terms of biological role, essential for recycling GMP and indirectly, cGMP. This chain is Guanylate kinase, found in Pseudomonas fluorescens (strain Pf0-1).